We begin with the raw amino-acid sequence, 192 residues long: Iodate reductase subunit IdrB (192 aa).

The segment at residues 1 to 52 (MSENIIPVRAVPAHDHEHDGERACMSRRRFLLFGGTSVALLSIASLPGVAQV) is a signal peptide (tat-type signal). Residues 102–173 (GADKDIVAFN…LEVQGDDIYA (72 aa)) form the Rieske domain. [2Fe-2S] cluster is bound by residues Cys-114, His-116, Cys-135, and His-138.

Belongs to the AOX family. The iodate reductase (Idr) complex is composed of a molybdopterin-dependent iodate reductase (IdrA and IdrB subunits) and two associated peroxidases (IdrP1 and IdrP2). [2Fe-2S] cluster serves as cofactor. In terms of processing, predicted to be exported by the Tat system. The position of the signal peptide cleavage has not been experimentally proven.

The protein localises to the periplasm. Involved in iodate respiration. Probably catalyzes the reduction of iodate (IO(3)(-)) to hypoiodous acid (HIO) and H(2)O(2), using a reduced cytochrome c as the electron donor. This Pseudomonas sp. (strain SCT) protein is Iodate reductase subunit IdrB.